Consider the following 473-residue polypeptide: Ribulose bisphosphate carboxylase large chain (473 aa).

Residues 1–2 (MS) constitute a propeptide that is removed on maturation. Position 3 is an N-acetylproline (Pro-3). Lys-14 is modified (N6,N6,N6-trimethyllysine). Substrate-binding residues include Asn-123 and Thr-173. Lys-175 functions as the Proton acceptor in the catalytic mechanism. Lys-177 contributes to the substrate binding site. Residues Lys-201, Asp-203, and Glu-204 each contribute to the Mg(2+) site. The residue at position 201 (Lys-201) is an N6-carboxylysine. The active-site Proton acceptor is the His-294. Substrate-binding residues include Arg-295, His-327, and Ser-379.

It belongs to the RuBisCO large chain family. Type I subfamily. As to quaternary structure, heterohexadecamer of 8 large chains and 8 small chains; disulfide-linked. The disulfide link is formed within the large subunit homodimers. Requires Mg(2+) as cofactor. In terms of processing, the disulfide bond which can form in the large chain dimeric partners within the hexadecamer appears to be associated with oxidative stress and protein turnover.

It is found in the plastid. The protein localises to the chloroplast. It carries out the reaction 2 (2R)-3-phosphoglycerate + 2 H(+) = D-ribulose 1,5-bisphosphate + CO2 + H2O. The enzyme catalyses D-ribulose 1,5-bisphosphate + O2 = 2-phosphoglycolate + (2R)-3-phosphoglycerate + 2 H(+). Functionally, ruBisCO catalyzes two reactions: the carboxylation of D-ribulose 1,5-bisphosphate, the primary event in carbon dioxide fixation, as well as the oxidative fragmentation of the pentose substrate in the photorespiration process. Both reactions occur simultaneously and in competition at the same active site. The sequence is that of Ribulose bisphosphate carboxylase large chain from Vigna unguiculata (Cowpea).